The primary structure comprises 174 residues: Small ribosomal subunit protein uS7c (174 aa).

It belongs to the universal ribosomal protein uS7 family. In terms of assembly, part of the 30S ribosomal subunit.

Its subcellular location is the plastid. The protein resides in the chloroplast. Its function is as follows. One of the primary rRNA binding proteins, it binds directly to 16S rRNA where it nucleates assembly of the head domain of the 30S subunit. The protein is Small ribosomal subunit protein uS7c (rps7) of Stigeoclonium helveticum (Green alga).